The following is a 180-amino-acid chain: Thebaine synthase 1 (180 aa).

Serine 96 lines the thebaine pocket. The active-site Proton acceptor is histidine 111. Residue threonine 127 participates in thebaine binding.

Belongs to the MLP family. In terms of assembly, homodimer (allosteric) and oligomers. In terms of tissue distribution, expressed in poppy latex.

It carries out the reaction (7S)-O-acetylsalutaridinol = thebaine + acetate + H(+). It participates in alkaloid biosynthesis; morphine biosynthesis. Functionally, catalyzes the formation of thebaine from (7S)-salutaridinol 7-O-acetate at the expense of labile hydroxylated by-products, which are preferentially produced by spontaneous allylic elimination. The polypeptide is Thebaine synthase 1 (Papaver somniferum (Opium poppy)).